We begin with the raw amino-acid sequence, 201 residues long: MYIGRFLVFGKTEEGYPFVTYRVSSRSFPNRLAKVMDDDTVSILPKELEEMFKNPYITYNCVKLVGDVAVATNGSHTDIIADKIKLGLPIRDALSYSLLTMDYEKDDYNTPRIAVVITKDEAYMGYVTDSDVRIKKVELEAGKAYYLGVYDACKITEHQVISVTGKTAEDLTKFVMDYEEFEKPVTAATVLVKDGFKLATL.

It belongs to the archaeal IMP cyclohydrolase family.

The enzyme catalyses IMP + H2O = 5-formamido-1-(5-phospho-D-ribosyl)imidazole-4-carboxamide. The protein operates within purine metabolism; IMP biosynthesis via de novo pathway; IMP from 5-formamido-1-(5-phospho-D-ribosyl)imidazole-4-carboxamide: step 1/1. Its function is as follows. Catalyzes the cyclization of 5-formylamidoimidazole-4-carboxamide ribonucleotide to IMP. This chain is IMP cyclohydrolase, found in Methanococcus maripaludis (strain C5 / ATCC BAA-1333).